The sequence spans 345 residues: MSESEAEETKISTEPVDNAWSMKIPAFRQEDNPHGMVEESSFATLFPKYRERYLKEVWPLVEQCLAEHHLKAELDLMEGSMVVKTSRKTWDPYIIIKARDMIKLMARSVPFEQAKRVLQDDIGCDIIKIGNLVHKKEKFVKRRQRLIGPNGATLKSIELLTDCYVLVQGNTVSALGPYKGLQQVRDIVLETMNNVHPIYNIKALMIKRELMKDPRLANEDWSRFLPKFKNKNISKRKQPKVKKQKKEYTPFPPSQPESKVDKQLASGEYFLNQEQKQAKRNQERTEKQKEAAKRQDERRNKDFVPPTEESAASSRKKEDGSSSSKVDVKALKAKLIKANKKARSS.

Residues 125-193 enclose the KH domain; the sequence is DIIKIGNLVH…VRDIVLETMN (69 aa). Residues 232 to 245 are compositionally biased toward basic residues; it reads NISKRKQPKVKKQK. 2 disordered regions span residues 232–260 and 273–345; these read NISK…ESKV and QEQK…ARSS. Positions 270–298 form a coiled coil; the sequence is FLNQEQKQAKRNQERTEKQKEAAKRQDER. Composition is skewed to basic and acidic residues over residues 276 to 302 and 315 to 330; these read KQAK…RNKD and RKKE…DVKA. Residues 331-345 are compositionally biased toward basic residues; it reads LKAKLIKANKKARSS.

Belongs to the KRR1 family. In terms of assembly, monomer. Component of the ribosomal small subunit (SSU) processome.

The protein resides in the nucleus. The protein localises to the nucleolus. Its function is as follows. Required for 40S ribosome biogenesis. Involved in nucleolar processing of pre-18S ribosomal RNA and ribosome assembly. Binds to RNA. Required for female germline development, cell viability during eye development and for survival of dividing cells and epithelial cells during early wing disk development. The protein is KRR1 small subunit processome component homolog (dbe) of Drosophila melanogaster (Fruit fly).